Consider the following 830-residue polypeptide: Isethionate sulfite-lyase (830 aa).

A PFL domain is found at 31 to 700; it reads KRVFKLLERF…VVSATPNGRV (670 aa). 2-hydroxyethane-1-sulfonate contacts are provided by residues arginine 189, glutamine 193, 468-470, and arginine 678; that span reads CIE. Cysteine 468 functions as the Cysteine radical intermediate in the catalytic mechanism. The active-site Proton acceptor is the glutamate 470. The 124-residue stretch at 707 to 830 folds into the Glycine radical domain; it reads DGSSPSHGAD…LIARTGHDQM (124 aa). A Glycine radical modification is found at glycine 805.

It belongs to the glycyl radical enzyme (GRE) family. Homodimer. Post-translationally, requires the activating protein IslB to generate the key active site glycyl radical on Gly-805 that is involved in catalysis.

The enzyme catalyses 2-hydroxyethane-1-sulfonate = acetaldehyde + sulfite + H(+). Its pathway is organosulfur degradation; alkanesulfonate degradation. Involved in an anaerobic respiration pathway that converts the sulfonate taurine (2-aminoethanesulfonate) to ammonia, acetate and sulfide. Catalyzes the radical-mediated C-S bond cleavage of isethionate (2-hydroxyethanesulfonate) to form sulfite and acetaldehyde. Is not able to use any alternate organosulfonate or (S)-1,2-propanediol or choline as a substrate, showing that this enzyme is highly specific for isethionate. The protein is Isethionate sulfite-lyase of Bilophila wadsworthia (strain 3_1_6).